The sequence spans 2352 residues: Ectopic P granules protein 5 (2352 aa).

Disordered stretches follow at residues 1–112 and 1315–1335; these read MAEL…IFPR and KNRESPLPPEIGSPRSRSSAK. A compositionally biased stretch (basic and acidic residues) spans 66 to 81; that stretch reads DSLKREEASEPLKDVR.

The protein belongs to the EPG5 family. As to expression, expressed in pharyngeal and body wall muscles and intestine cells.

It is found in the cytoplasm. The protein localises to the cytoplasmic vesicle. Its subcellular location is the phagosome membrane. In terms of biological role, involved in the maturation of autophagosomes into autolysosomes during starvation-induced autotrophy. Specifically, involved in the clearance of apoptotic cells by promoting the delivery of engulfed apoptotic cells to the lysosome. In Caenorhabditis elegans, this protein is Ectopic P granules protein 5.